A 612-amino-acid polypeptide reads, in one-letter code: Dihydroxy-acid dehydratase (612 aa).

Asp81 is a Mg(2+) binding site. Cys122 provides a ligand contact to [2Fe-2S] cluster. The Mg(2+) site is built by Asp123 and Lys124. Lys124 bears the N6-carboxylysine mark. Residue Cys195 coordinates [2Fe-2S] cluster. Residue Glu491 participates in Mg(2+) binding. The active-site Proton acceptor is Ser517.

Belongs to the IlvD/Edd family. As to quaternary structure, homodimer. Requires [2Fe-2S] cluster as cofactor. Mg(2+) serves as cofactor.

The catalysed reaction is (2R)-2,3-dihydroxy-3-methylbutanoate = 3-methyl-2-oxobutanoate + H2O. It catalyses the reaction (2R,3R)-2,3-dihydroxy-3-methylpentanoate = (S)-3-methyl-2-oxopentanoate + H2O. It participates in amino-acid biosynthesis; L-isoleucine biosynthesis; L-isoleucine from 2-oxobutanoate: step 3/4. It functions in the pathway amino-acid biosynthesis; L-valine biosynthesis; L-valine from pyruvate: step 3/4. Functions in the biosynthesis of branched-chain amino acids. Catalyzes the dehydration of (2R,3R)-2,3-dihydroxy-3-methylpentanoate (2,3-dihydroxy-3-methylvalerate) into 2-oxo-3-methylpentanoate (2-oxo-3-methylvalerate) and of (2R)-2,3-dihydroxy-3-methylbutanoate (2,3-dihydroxyisovalerate) into 2-oxo-3-methylbutanoate (2-oxoisovalerate), the penultimate precursor to L-isoleucine and L-valine, respectively. This chain is Dihydroxy-acid dehydratase, found in Bartonella tribocorum (strain CIP 105476 / IBS 506).